The chain runs to 146 residues: Snake venom vascular endothelial growth factor toxin (146 aa).

Positions 1–24 (MAAYLLAVAILFCIQGWPLGTVQG) are cleaved as a signal peptide. Gln-25 carries the post-translational modification Pyrrolidone carboxylic acid. Disulfide bonds link Cys-38–Cys-80, Cys-69–Cys-115, and Cys-73–Cys-117. Residues 118 to 146 (RPRSASGVNSRKHKRNPEEGEQRAKFPFV) are disordered. Residues 133–146 (NPEEGEQRAKFPFV) show a composition bias toward basic and acidic residues.

Belongs to the PDGF/VEGF growth factor family. Snake venom VEGF subfamily. In terms of assembly, homodimer; disulfide-linked. Interacts with VEGF receptor-1 (FLT1) with a high affinity, whereas it binds to VEGF receptor-2 (KDR) with a low affinity. Does not bind VEGF receptor-3 (FLT4). In terms of tissue distribution, expressed by the venom gland.

It localises to the secreted. Its function is as follows. Snake venom VEGFs that may contribute to venom dispersion and prey subjugation by inducing vascular permeability and hypotension. This protein induces an increase in capillary permeability after intradermal injection, as well as a drastic hypotensive effect after intravenous injection. The hypotension is mediated by nitric oxide (NO), which is produced by VEGF-activated endothelium NO synthase. Also induces angiogenesis in vitro. Like other crotalid VEGFs, this protein interacts with VEGF receptor-1 (FLT1) with a high affinity, whereas it binds to VEGF receptor-2 (KDR) with a low affinity. The polypeptide is Snake venom vascular endothelial growth factor toxin (Bothrops erythromelas (Caatinga lance head)).